The following is a 316-amino-acid chain: Lys-63-specific deubiquitinase BRCC36 (316 aa).

The residue at position 2 (A2) is an N-acetylalanine. The region spanning 12-179 (VHLESDAFLV…YTCFQSIQAQ (168 aa)) is the MPN domain. The Zn(2+) site is built by H122, H124, and D135. Positions 122-135 (HSHPHITVWPSHVD) match the JAMM motif motif. The residue at position 258 (S258) is a Phosphoserine.

Belongs to the peptidase M67A family. BRCC36 subfamily. In terms of assembly, component of the ARISC complex, at least composed of UIMC1/RAP80, ABRAXAS1, BRCC3/BRCC36, BABAM2 and BABAM1/NBA1. Component of the BRCA1-A complex, at least composed of BRCA1, BARD1, UIMC1/RAP80, ABRAXAS1, BRCC3/BRCC36, BABAM2 and BABAM1/NBA1. In the BRCA1-A complex, interacts directly with ABRAXAS1 and BABAM2. Component of the BRISC complex, at least composed of ABRAXAS2, BRCC3/BRCC36, BABAM2 and BABAM1/NBA1. Identified in a complex with SHMT2 and the other subunits of the BRISC complex. In the BRISC complex, interacts directly with ABRAXAS2. Identified in a complex with ABRAXAS2 and NUMA1. The BRISC complex interacts with the CSN complex. Component of the BRCA1/BRCA2 containing complex (BRCC), which also contains BRCA1, BRCA2, BARD1, BABAM2 and RAD51. BRCC is a ubiquitin E3 ligase complex that enhances cellular survival following DNA damage. Interacts with BRCA1. Binds polyubiquitin. Interacts with PWWP2B. Interacts with HDAC1; this interaction is enhanced in the presence of PWWP2B. Zn(2+) serves as cofactor.

The protein localises to the nucleus. Its subcellular location is the cytoplasm. It is found in the cytoskeleton. The protein resides in the spindle pole. Metalloprotease that specifically cleaves 'Lys-63'-linked polyubiquitin chains. Does not have activity toward 'Lys-48'-linked polyubiquitin chains. Component of the BRCA1-A complex, a complex that specifically recognizes 'Lys-63'-linked ubiquitinated histones H2A and H2AX at DNA lesions sites, leading to target the BRCA1-BARD1 heterodimer to sites of DNA damage at double-strand breaks (DSBs). In the BRCA1-A complex, it specifically removes 'Lys-63'-linked ubiquitin on histones H2A and H2AX, antagonizing the RNF8-dependent ubiquitination at double-strand breaks (DSBs). Catalytic subunit of the BRISC complex, a multiprotein complex that specifically cleaves 'Lys-63'-linked ubiquitin in various substrates. Mediates the specific 'Lys-63'-specific deubiquitination associated with the COP9 signalosome complex (CSN), via the interaction of the BRISC complex with the CSN complex. The BRISC complex is required for normal mitotic spindle assembly and microtubule attachment to kinetochores via its role in deubiquitinating NUMA1. Plays a role in interferon signaling via its role in the deubiquitination of the interferon receptor IFNAR1; deubiquitination increases IFNAR1 activity by enhancing its stability and cell surface expression. Acts as a regulator of the NLRP3 inflammasome by mediating deubiquitination of NLRP3, leading to NLRP3 inflammasome assembly. Down-regulates the response to bacterial lipopolysaccharide (LPS) via its role in IFNAR1 deubiquitination. Deubiquitinates HDAC1 and PWWP2B leading to their stabilization. The polypeptide is Lys-63-specific deubiquitinase BRCC36 (BRCC3) (Bos taurus (Bovine)).